We begin with the raw amino-acid sequence, 654 residues long: Marinolic acid--CoA ligase (654 aa).

The protein belongs to the ATP-dependent AMP-binding enzyme family.

The enzyme catalyses ATP + a marinolic acid + CoA = AMP + diphosphate + a marinoloyl-CoA.. It catalyses the reaction ATP + a pseudomonic acid + CoA = AMP + diphosphate + a pseudomonoyl-CoA.. It carries out the reaction marinolate C + ATP + CoA = marinoloyl-CoA C + AMP + diphosphate. The catalysed reaction is pseudomonate C + ATP + CoA = pseudomonoyl-CoA C + AMP + diphosphate. The protein operates within antibiotic biosynthesis. Acyl-CoA ligase that catalyzes the CoA acylation of pseudomonate C, leading to the formation of pseudomonoyl-CoA C (PAC-CoA). Also shows high activity with pseudomonoyl-CoA A as substrate. In addition, can activate acetic, octanoic, 2,4-dodecadienoic and 2,4-decadienoic acids, although with much lower activity. In vivo, is probably involved in the biosynthesis of thiomarinol, a naturally occurring double-headed antibiotic. The protein is Marinolic acid--CoA ligase of Pseudoalteromonas sp. (strain SANK 73390).